Reading from the N-terminus, the 215-residue chain is Urease accessory protein UreG (215 aa).

The tract at residues 1–21 (MNAPAPSSARRTKKLPPLRVG) is disordered. Position 24-31 (24-31 (GPVGSGKT)) interacts with GTP.

It belongs to the SIMIBI class G3E GTPase family. UreG subfamily. In terms of assembly, homodimer. UreD, UreF and UreG form a complex that acts as a GTP-hydrolysis-dependent molecular chaperone, activating the urease apoprotein by helping to assemble the nickel containing metallocenter of UreC. The UreE protein probably delivers the nickel.

The protein resides in the cytoplasm. In terms of biological role, facilitates the functional incorporation of the urease nickel metallocenter. This process requires GTP hydrolysis, probably effectuated by UreG. The chain is Urease accessory protein UreG from Burkholderia lata (strain ATCC 17760 / DSM 23089 / LMG 22485 / NCIMB 9086 / R18194 / 383).